The following is a 30-amino-acid chain: Cycloviolacin-O4 (30 aa).

Residues 1–30 (GIPCGESCVWIPCISSAIGCSCKNKVCYRN) constitute a cross-link (cyclopeptide (Gly-Asn)). Cystine bridges form between Cys-4–Cys-20, Cys-8–Cys-22, and Cys-13–Cys-27.

Post-translationally, this is a cyclic peptide. Expressed in petals, petioles, roots and runners but not in leaves (at protein level).

Functionally, probably participates in a plant defense mechanism. The polypeptide is Cycloviolacin-O4 (Viola odorata (Sweet violet)).